The primary structure comprises 222 residues: Pyrrolidone-carboxylate peptidase (222 aa).

Catalysis depends on residues Glu-80, Cys-146, and His-170.

This sequence belongs to the peptidase C15 family. In terms of assembly, homotetramer.

The protein resides in the cytoplasm. The enzyme catalyses Release of an N-terminal pyroglutamyl group from a polypeptide, the second amino acid generally not being Pro.. Functionally, removes 5-oxoproline from various penultimate amino acid residues except L-proline. The polypeptide is Pyrrolidone-carboxylate peptidase (Mycobacterium tuberculosis (strain ATCC 25177 / H37Ra)).